The sequence spans 510 residues: NAD(P)H-quinone oxidoreductase subunit 2 B, chloroplastic (510 aa).

The next 13 membrane-spanning stretches (helical) occupy residues 24–44 (LLLF…GLIL), 59–79 (WFYF…LFRW), 99–119 (IFQF…VEYI), 124–144 (MAIT…MFLC), 150–170 (ITIF…SGYT), 184–204 (LLMG…LYGL), 229–249 (ISIA…LAPF), 295–315 (WHLL…LIAI), 323–343 (MLAY…IVGD), 354–374 (YMLF…LFGL), 395–415 (ALSL…AGFF), 418–438 (LHLF…IGLL), and 484–504 (MIVC…ILAI).

Belongs to the complex I subunit 2 family. In terms of assembly, NDH is composed of at least 16 different subunits, 5 of which are encoded in the nucleus.

The protein localises to the plastid. The protein resides in the chloroplast thylakoid membrane. The catalysed reaction is a plastoquinone + NADH + (n+1) H(+)(in) = a plastoquinol + NAD(+) + n H(+)(out). It catalyses the reaction a plastoquinone + NADPH + (n+1) H(+)(in) = a plastoquinol + NADP(+) + n H(+)(out). Its function is as follows. NDH shuttles electrons from NAD(P)H:plastoquinone, via FMN and iron-sulfur (Fe-S) centers, to quinones in the photosynthetic chain and possibly in a chloroplast respiratory chain. The immediate electron acceptor for the enzyme in this species is believed to be plastoquinone. Couples the redox reaction to proton translocation, and thus conserves the redox energy in a proton gradient. This chain is NAD(P)H-quinone oxidoreductase subunit 2 B, chloroplastic, found in Acorus calamus (Sweet flag).